The following is an 89-amino-acid chain: DNA-directed RNA polymerase subunit omega (89 aa).

This sequence belongs to the RNA polymerase subunit omega family. As to quaternary structure, the RNAP catalytic core consists of 2 alpha, 1 beta, 1 beta' and 1 omega subunit. When a sigma factor is associated with the core the holoenzyme is formed, which can initiate transcription.

It carries out the reaction RNA(n) + a ribonucleoside 5'-triphosphate = RNA(n+1) + diphosphate. In terms of biological role, promotes RNA polymerase assembly. Latches the N- and C-terminal regions of the beta' subunit thereby facilitating its interaction with the beta and alpha subunits. This is DNA-directed RNA polymerase subunit omega from Clavibacter michiganensis subsp. michiganensis (strain NCPPB 382).